The sequence spans 599 residues: Elongation factor 4 (599 aa).

The region spanning 2-184 is the tr-type G domain; it reads KNIRNFSIIA…RLVRDIPPPE (183 aa). GTP-binding positions include 14–19 and 131–134; these read DHGKST and NKID.

It belongs to the TRAFAC class translation factor GTPase superfamily. Classic translation factor GTPase family. LepA subfamily.

The protein localises to the cell inner membrane. The catalysed reaction is GTP + H2O = GDP + phosphate + H(+). Its function is as follows. Required for accurate and efficient protein synthesis under certain stress conditions. May act as a fidelity factor of the translation reaction, by catalyzing a one-codon backward translocation of tRNAs on improperly translocated ribosomes. Back-translocation proceeds from a post-translocation (POST) complex to a pre-translocation (PRE) complex, thus giving elongation factor G a second chance to translocate the tRNAs correctly. Binds to ribosomes in a GTP-dependent manner. In Cronobacter sakazakii (strain ATCC BAA-894) (Enterobacter sakazakii), this protein is Elongation factor 4.